The sequence spans 61 residues: uncharacterized protein (61 aa).

The first 30 residues, 1 to 30 (MDVEVANMAAKLRVRGLKLPNAIVVSTAIL), serve as a signal peptide directing secretion.

This is an uncharacterized protein from Archaeoglobus fulgidus (strain ATCC 49558 / DSM 4304 / JCM 9628 / NBRC 100126 / VC-16).